We begin with the raw amino-acid sequence, 312 residues long: Elongation factor Ts (312 aa).

Positions Thr80–Val83 are involved in Mg(2+) ion dislocation from EF-Tu.

This sequence belongs to the EF-Ts family.

Its subcellular location is the cytoplasm. Associates with the EF-Tu.GDP complex and induces the exchange of GDP to GTP. It remains bound to the aminoacyl-tRNA.EF-Tu.GTP complex up to the GTP hydrolysis stage on the ribosome. The polypeptide is Elongation factor Ts (Maricaulis maris (strain MCS10) (Caulobacter maris)).